We begin with the raw amino-acid sequence, 439 residues long: Methylenetetrahydrofolate--tRNA-(uracil-5-)-methyltransferase TrmFO (439 aa).

7 to 12 (GAGLAG) lines the FAD pocket.

It belongs to the MnmG family. TrmFO subfamily. FAD is required as a cofactor.

It localises to the cytoplasm. The enzyme catalyses uridine(54) in tRNA + (6R)-5,10-methylene-5,6,7,8-tetrahydrofolate + NADH + H(+) = 5-methyluridine(54) in tRNA + (6S)-5,6,7,8-tetrahydrofolate + NAD(+). It carries out the reaction uridine(54) in tRNA + (6R)-5,10-methylene-5,6,7,8-tetrahydrofolate + NADPH + H(+) = 5-methyluridine(54) in tRNA + (6S)-5,6,7,8-tetrahydrofolate + NADP(+). In terms of biological role, catalyzes the folate-dependent formation of 5-methyl-uridine at position 54 (M-5-U54) in all tRNAs. In Heliobacterium modesticaldum (strain ATCC 51547 / Ice1), this protein is Methylenetetrahydrofolate--tRNA-(uracil-5-)-methyltransferase TrmFO.